Here is a 425-residue protein sequence, read N- to C-terminus: Serine--tRNA ligase (425 aa).

An L-serine-binding site is contributed by 230 to 232 (TAE). 261-263 (RSE) is an ATP binding site. Glu284 is an L-serine binding site. 348-351 (EISS) is an ATP binding site. Ser384 contributes to the L-serine binding site.

Belongs to the class-II aminoacyl-tRNA synthetase family. Type-1 seryl-tRNA synthetase subfamily. In terms of assembly, homodimer. The tRNA molecule binds across the dimer.

The protein resides in the cytoplasm. It carries out the reaction tRNA(Ser) + L-serine + ATP = L-seryl-tRNA(Ser) + AMP + diphosphate + H(+). It catalyses the reaction tRNA(Sec) + L-serine + ATP = L-seryl-tRNA(Sec) + AMP + diphosphate + H(+). It participates in aminoacyl-tRNA biosynthesis; selenocysteinyl-tRNA(Sec) biosynthesis; L-seryl-tRNA(Sec) from L-serine and tRNA(Sec): step 1/1. Its function is as follows. Catalyzes the attachment of serine to tRNA(Ser). Is also able to aminoacylate tRNA(Sec) with serine, to form the misacylated tRNA L-seryl-tRNA(Sec), which will be further converted into selenocysteinyl-tRNA(Sec). The polypeptide is Serine--tRNA ligase (Streptococcus pyogenes serotype M3 (strain SSI-1)).